Here is a 1122-residue protein sequence, read N- to C-terminus: Histidine kinase CKI1 (1122 aa).

At 1-12 the chain is on the cytoplasmic side; sequence MMVKVTKLVASR. Residues 13-33 form a helical membrane-spanning segment; it reads PIVVFCVLAFLVVVFECIWIS. Residues 34 to 345 lie on the Extracellular side of the membrane; sequence NWRTTTENLV…KHQAEKAKYQ (312 aa). Residues 346–366 traverse the membrane as a helical segment; the sequence is LIVVMIFLGFGWPVWFVWFMM. The Cytoplasmic segment spans residues 367 to 1122; that stretch reads QATRREMHMR…VIREIESKRH (756 aa). The Histidine kinase domain maps to 402–671; sequence NASHDIRGAL…CFQFNVLLTT (270 aa). A Phosphohistidine; by autocatalysis modification is found at histidine 405. Residues 918-928 are compositionally biased toward basic and acidic residues; the sequence is AERSPKHKVQE. Positions 918–981 are disordered; that stretch reads AERSPKHKVQ…QETSKPSDDE (64 aa). The region spanning 987 to 1120 is the Response regulatory domain; that stretch reads RVLVVDDNFI…ANVIREIESK (134 aa). At aspartate 1050 the chain carries 4-aspartylphosphate.

As to quaternary structure, homodimer. Interacts with AHP2 and AHP3. As to expression, expressed in vascular tissues of inflorescence stems and floral organs, especially in procambium cells, and in siliques.

The protein localises to the cell membrane. The catalysed reaction is ATP + protein L-histidine = ADP + protein N-phospho-L-histidine.. Essential protein. Functions as a histidine kinase and transmits the stress signal to a downstream MAPK cascade. This protein undergoes an ATP-dependent autophosphorylation at a conserved histidine residue in the kinase core, and a phosphoryl group is then transferred to a conserved aspartate residue in the receiver domain. Required for the development of megagametophyte in female gametophyte (embryo sac) independently of cytokinin. Contributes to vascular bundle formation and secondary growth in a cytokinin-independent manner, probably by promoting the maintenance of mitotic activity and/or identity of procambial cells. Seems to influence and promote the cytokinin signaling pathway. The chain is Histidine kinase CKI1 (CKI1) from Arabidopsis thaliana (Mouse-ear cress).